A 438-amino-acid chain; its full sequence is Cell division cycle-associated 7-like protein (438 aa).

The short motif at 9–33 (IPKEVADIFSAPSDDEEFVGFQDDV) is the Integrase domain-binding motif 1 (IBM1) element. Ser21 carries the post-translational modification Phosphoserine. Positions 56 to 115 (VCFRSKYFTEELRRIFKEDTDSEMEDFEGFTESELNMSSNPELMESELSDSDKAYPVMND) are PSIP1-binding. Positions 63 to 89 (FTEELRRIFKEDTDSEMEDFEGFTESE) match the Integrase domain-binding motif 2 (IBM2) motif. The tract at residues 74 to 199 (DTDSEMEDFE…ESRAESQENS (126 aa)) is disordered. The residue at position 75 (Thr75) is a Phosphothreonine. A compositionally biased stretch (acidic residues) spans 75 to 86 (TDSEMEDFEGFT). Ser77 is modified (phosphoserine). Thr86 is subject to Phosphothreonine. Phosphoserine is present on residues Ser101, Ser104, Ser135, Ser136, and Ser159. A compositionally biased stretch (basic and acidic residues) spans 152-167 (RTPDKDSSHLLDSKTD). Residues 168–177 (LRRKKSSRQP) are compositionally biased toward basic residues. A phosphoserine mark is found at Ser183 and Ser185. An MYC-binding region spans residues 201–223 (ALLKRAMNIKENKAMLAQLLAEL). Residues Lys210 and Lys213 each participate in a glycyl lysine isopeptide (Lys-Gly) (interchain with G-Cter in SUMO2) cross-link. Ser249 carries the post-translational modification Phosphoserine.

In terms of assembly, interacts with MYC. Interacts (via IBM motifs) with PSIP1 (via IBD domain); phosphorylation increases its affinity for PSIP1. In terms of processing, phosphorylation increases its interaction with PSIP1. As to expression, expressed in all tissues but not detected in total brain.

It is found in the cytoplasm. The protein localises to the nucleus. Its function is as follows. Plays a role in transcriptional regulation as a repressor that inhibits monoamine oxidase A (MAOA) activity and gene expression by binding to the promoter. Plays an important oncogenic role in mediating the full transforming effect of MYC in medulloblastoma cells. Involved in apoptotic signaling pathways; May act downstream of P38-kinase and BCL-2, but upstream of CASP3/caspase-3 as well as CCND1/cyclin D1 and E2F1. The polypeptide is Cell division cycle-associated 7-like protein (Cdca7l) (Mus musculus (Mouse)).